We begin with the raw amino-acid sequence, 1438 residues long: DNA polymerase III PolC-type (1438 aa).

The 157-residue stretch at 422–578 folds into the Exonuclease domain; sequence YVVFDVETTG…YDTEATAYIF (157 aa).

Belongs to the DNA polymerase type-C family. PolC subfamily.

Its subcellular location is the cytoplasm. It carries out the reaction DNA(n) + a 2'-deoxyribonucleoside 5'-triphosphate = DNA(n+1) + diphosphate. Functionally, required for replicative DNA synthesis. This DNA polymerase also exhibits 3' to 5' exonuclease activity. In Staphylococcus aureus (strain bovine RF122 / ET3-1), this protein is DNA polymerase III PolC-type.